A 182-amino-acid polypeptide reads, in one-letter code: Alpha-S2-casein (182 aa).

Residues 1 to 15 form the signal peptide; sequence MKFFIFTCLLAVALA. Residues Ser-22, Ser-23, and Ser-24 each carry the phosphoserine modification.

Belongs to the alpha-casein family. As to expression, mammary gland specific. Secreted in milk.

The protein localises to the secreted. In terms of biological role, important role in the capacity of milk to transport calcium phosphate. The polypeptide is Alpha-S2-casein (CSN1S2) (Oryctolagus cuniculus (Rabbit)).